Here is a 659-residue protein sequence, read N- to C-terminus: DNA ligase (659 aa).

Residues 31 to 35, 80 to 81, and Glu-109 each bind NAD(+); these read DFVYD and SL. Lys-111 functions as the N6-AMP-lysine intermediate in the catalytic mechanism. Positions 132, 166, 281, and 305 each coordinate NAD(+). Positions 398, 401, 416, and 421 each coordinate Zn(2+). Residues 581–659 enclose the BRCT domain; it reads VTTHPFNGKT…EATFKVKINE (79 aa).

The protein belongs to the NAD-dependent DNA ligase family. LigA subfamily. The cofactor is Mg(2+). Requires Mn(2+) as cofactor.

It carries out the reaction NAD(+) + (deoxyribonucleotide)n-3'-hydroxyl + 5'-phospho-(deoxyribonucleotide)m = (deoxyribonucleotide)n+m + AMP + beta-nicotinamide D-nucleotide.. Its function is as follows. DNA ligase that catalyzes the formation of phosphodiester linkages between 5'-phosphoryl and 3'-hydroxyl groups in double-stranded DNA using NAD as a coenzyme and as the energy source for the reaction. It is essential for DNA replication and repair of damaged DNA. This is DNA ligase from Acholeplasma laidlawii (strain PG-8A).